The chain runs to 275 residues: Large ribosomal subunit protein uL2 (275 aa).

Positions 210-275 are disordered; it reads GRNRHRGIRP…DKLIISRKKK (66 aa). Basic residues predominate over residues 257-275; that stretch reads FKTRKKKASDKLIISRKKK.

It belongs to the universal ribosomal protein uL2 family. In terms of assembly, part of the 50S ribosomal subunit. Forms a bridge to the 30S subunit in the 70S ribosome.

In terms of biological role, one of the primary rRNA binding proteins. Required for association of the 30S and 50S subunits to form the 70S ribosome, for tRNA binding and peptide bond formation. It has been suggested to have peptidyltransferase activity; this is somewhat controversial. Makes several contacts with the 16S rRNA in the 70S ribosome. In Helicobacter hepaticus (strain ATCC 51449 / 3B1), this protein is Large ribosomal subunit protein uL2.